A 70-amino-acid chain; its full sequence is Alpha-conotoxin EIIB (70 aa).

An N-terminal signal peptide occupies residues 1–21; sequence MGMRMMFIVFLLVVLATTVVS. A propeptide spanning residues 22–51 is cleaved from the precursor; the sequence is FTLDHVLGLASEGRNAKAIDNALDQRDPKR. Gln-52 carries the pyrrolidone carboxylic acid modification. Pro-54 carries the hydroxyproline modification. Disulfide bonds link Cys-56–Cys-62 and Cys-57–Cys-67. The residue at position 67 (Cys-67) is a Cysteine amide.

As to expression, expressed by the venom duct.

It localises to the secreted. Its function is as follows. Alpha-conotoxins bind to the nicotinic acetylcholine receptors (nAChR) and inhibit them. This peptide potently blocks muscular nicotinic acetylcholine receptor (CHRNA1-CHRNB1-CHRNG-CHRND), and has no effect on neuronal receptors. It is able to totally displace [125I]-Bgtx from the Torpedo receptor with an inhibition constant (Ki) of 2.2 and 0.7 nM. This is Alpha-conotoxin EIIB from Conus ermineus (Agate cone).